The chain runs to 394 residues: F-box/kelch-repeat protein At1g23390 (394 aa).

The F-box domain maps to 15 to 62 (EEESSIDGDILESILSYLPLLDLDSACQVSKSWNRAVFYSLRRLKTMP). Kelch repeat units follow at residues 65–111 (FVYN…RSSH), 155–204 (SLII…TWLS), 206–252 (AVSS…SIGF), and 321–369 (MVYV…VIVA).

This Arabidopsis thaliana (Mouse-ear cress) protein is F-box/kelch-repeat protein At1g23390.